The sequence spans 756 residues: Amine oxidase [copper-containing] 2 (756 aa).

The Cytoplasmic segment spans residues 1 to 4 (MHLK). A helical membrane pass occupies residues 5–25 (IVLAFLALSLITIFALAYVLL). Residues 26–756 (TSPGGSSQPP…DLPPFSYHGF (731 aa)) lie on the Extracellular side of the membrane. Residues N133, N198, and N226 are each glycosylated (N-linked (GlcNAc...) asparagine). D380 acts as the Proton acceptor in catalysis. The cysteines at positions 398 and 424 are disulfide-linked. The Schiff-base intermediate with substrate; via topaquinone role is filled by Y465. Y465 carries the 2',4',5'-topaquinone modification. Cu(2+) is bound by residues H516 and H518. The Ca(2+) site is built by D525, L526, D527, E568, E637, F659, and N661. N662 is a glycosylation site (N-linked (GlcNAc...) asparagine). Ca(2+) is bound by residues E663, D669, and L670. H680 contacts Cu(2+). Cysteines 730 and 737 form a disulfide.

It belongs to the copper/topaquinone oxidase family. Homodimer; disulfide-linked. Probably forms heterodimers with AOC3. Cu(2+) is required as a cofactor. Ca(2+) serves as cofactor. It depends on L-topaquinone as a cofactor. In terms of processing, topaquinone (TPQ) is generated by copper-dependent autoxidation of a specific tyrosyl residue. Expressed in many tissues including adipocytes with higher expression in retina where it is active. In terms of tissue distribution, not expressed in testis. As to expression, not expressed in thymus.

The protein localises to the cell membrane. It localises to the cytoplasm. The enzyme catalyses 2-phenylethylamine + O2 + H2O = 2-phenylacetaldehyde + H2O2 + NH4(+). It catalyses the reaction tryptamine + O2 + H2O = indole-3-acetaldehyde + H2O2 + NH4(+). It carries out the reaction tyramine + O2 + H2O = (4-hydroxyphenyl)acetaldehyde + H2O2 + NH4(+). In terms of biological role, catalyzes the oxidative deamination of primary amines to the corresponding aldehydes with the concomitant production of hydrogen peroxide and ammonia. Has a preference for 2-phenylethylamine, tryptamine and tyramine. Could also act on methylamine and benzylamine but much less efficiently. The polypeptide is Amine oxidase [copper-containing] 2 (Homo sapiens (Human)).